We begin with the raw amino-acid sequence, 363 residues long: Isopentenyl-diphosphate delta-isomerase (363 aa).

Residue 6-7 (RK) participates in substrate binding. FMN contacts are provided by residues 64-66 (AMT), Ser-94, and Asn-123. Gln-153 contributes to the substrate binding site. Glu-154 provides a ligand contact to Mg(2+). FMN is bound by residues Lys-185, Ser-210, Thr-215, 259-261 (GVR), and 280-281 (SA).

It belongs to the IPP isomerase type 2 family. As to quaternary structure, homooctamer. Dimer of tetramers. Requires Mg(2+) as cofactor. FMN is required as a cofactor. NADPH serves as cofactor.

It is found in the cytoplasm. It catalyses the reaction isopentenyl diphosphate = dimethylallyl diphosphate. In terms of biological role, involved in the biosynthesis of isoprenoids. Catalyzes the 1,3-allylic rearrangement of the homoallylic substrate isopentenyl (IPP) to its allylic isomer, dimethylallyl diphosphate (DMAPP). This is Isopentenyl-diphosphate delta-isomerase from Streptomyces sp. (strain CL190).